Here is a 515-residue protein sequence, read N- to C-terminus: MVVAYKHEPFTDFSVEANKLAFEEGLKKVESYLGQDYPLIIGGEKITTEDKIVSVNPANKEELVGRVSKASRELAEKAMQVADETFQTWRKSKPEMRADILFRAAAIVRRRKHEFSAILVKEAGKPWNEADADTAEAIDFMEYYGRQMLKLKDGIPVESRPIEYNRFSYIPLGVGVIISPWNFPFAIMAGMTTAALVSGNTVLLKPASTTPVVAAKFMEVLEEAGLPAGVVNFVPGSGSEVGDYLVDHPRTRFISFTGSRDVGIRIYERAAKVNPGQIWLKRVIAEMGGKDTIVVDKEADLELAAKSIVASAFGFSGQKCSACSRAVIHEDVYDHVLNRAVELTKELTVANPAVLGTNMGPVNDQAAFDKVMSYVAIGKEEGRILAGGEGDDSKGWFIQPTIVADVAEDARLMKEEIFGPVVAFCKAKDFDHALAIANNTEYGLTGAVISNNRDHIEKAREDFHVGNLYFNRGCTGAIVGYQPFGGFNMSGTDSKAGGPDYLALHMQAKTTSETL.

Residues E286 and C320 contribute to the active site.

Belongs to the aldehyde dehydrogenase family. RocA subfamily.

The catalysed reaction is L-glutamate 5-semialdehyde + NAD(+) + H2O = L-glutamate + NADH + 2 H(+). The protein operates within amino-acid degradation; L-proline degradation into L-glutamate; L-glutamate from L-proline: step 2/2. The protein is 1-pyrroline-5-carboxylate dehydrogenase of Bacillus cereus (strain ATCC 10987 / NRS 248).